The chain runs to 62 residues: Beta-defensin 10 (62 aa).

The first 22 residues, 1–22 (MRLHHLLLLLLLVVLSSGSGFT), serve as a signal peptide directing secretion. At Gln-23 the chain carries Pyrrolidone carboxylic acid. 3 disulfides stabilise this stretch: Cys-31-Cys-60, Cys-38-Cys-53, and Cys-43-Cys-61.

It belongs to the beta-defensin family. Neutrophilic granules.

Its subcellular location is the secreted. In terms of biological role, has bactericidal activity. Active against E.coli ML35 and S.aureus 502A. The chain is Beta-defensin 10 (DEFB10) from Bos taurus (Bovine).